The chain runs to 404 residues: Proteasomal ubiquitin receptor ADRM1-A (404 aa).

The Pru domain maps to 17–130 (SSSKYLVEFR…RKLNEYLNNP (114 aa)). A compositionally biased stretch (low complexity) spans 195–247 (GSGGPTTSSSSSSSRSQSAAVTPSSTTSSTRTTSAPVAPAAAPATTPSPAVSS). 2 disordered regions span residues 195-258 (GSGG…TSPT) and 376-404 (FAKA…MSLD). The segment covering 248-258 (NDGASEATSPT) has biased composition (polar residues). The region spanning 278–390 (TGEGGQQVDL…QSTSSQKERE (113 aa)) is the DEUBAD domain. Over residues 386-395 (QKERESSEKK) the composition is skewed to basic and acidic residues.

The protein belongs to the ADRM1 family. Component of the 19S proteasome regulatory particle complex. The 26S proteasome consists of a 20S core particle (CP) and two 19S regulatory subunits (RP).

It localises to the cytoplasm. The protein localises to the nucleus. In terms of biological role, component of the 26S proteasome, a multiprotein complex involved in the ATP-dependent degradation of ubiquitinated proteins. This complex plays a key role in the maintenance of protein homeostasis by removing misfolded or damaged proteins, which could impair cellular functions, and by removing proteins whose functions are no longer required. Therefore, the proteasome participates in numerous cellular processes, including cell cycle progression, apoptosis, or DNA damage repair. Within the complex, functions as a proteasomal ubiquitin receptor. The protein is Proteasomal ubiquitin receptor ADRM1-A (adrm1-a) of Xenopus laevis (African clawed frog).